The following is a 381-amino-acid chain: MTQTALNIGTTLNKTKNDVELRKVFKVFEGHTAVKGVDFNIRQGEFFSILGPSGCGKTTTLRLIAGFETPSAGEIIIRGQSMSQTPAYRRPVNTVFQSYALFNHLSVKDNIAFGLRIKRLGKTETEEKVAQALQLVKMEKFADRYPNQISGGQQQRVALARALVNRPAVLLLDEPLGALDLKLRKQMQMELSNIHKDLGVTFVMVTHDQQEAMSMSDRIAVMHEGRIEQIGSPQEIYECPESPFVADFIGDTNLFQGCVEYNNNSSLVVKTDSGLNISAEYKKVNGKNGEIYGGTSVVLSVRPEKVNLSLYPPDVSENCFEGRLRNVMYMGTHVHYQVNLLSGDQMMVRQPNTERTLPNLDTPMYVYWSKQNCLALSESKS.

One can recognise an ABC transporter domain in the interval 19-249 (VELRKVFKVF…PESPFVADFI (231 aa)). 51-58 (GPSGCGKT) lines the ATP pocket.

The protein belongs to the ABC transporter superfamily. Spermidine/putrescine importer (TC 3.A.1.11.1) family. In terms of assembly, the complex is composed of two ATP-binding proteins (PotA), two transmembrane proteins (PotB and PotC) and a solute-binding protein (PotD).

Its subcellular location is the cell inner membrane. The enzyme catalyses ATP + H2O + polyamine-[polyamine-binding protein]Side 1 = ADP + phosphate + polyamineSide 2 + [polyamine-binding protein]Side 1.. Its function is as follows. Part of the ABC transporter complex PotABCD involved in spermidine/putrescine import. Responsible for energy coupling to the transport system. This chain is Spermidine/putrescine import ATP-binding protein PotA, found in Trichodesmium erythraeum (strain IMS101).